The chain runs to 141 residues: MVSEHISTQQVGPDALFSPLGWDLLALALYVALACIIVVSLLLAARFLGHRSRTPLKNLPYECGVEPTGPARPGYPVPFYLTAIFFVVFDVEVAFIASWAVAYDLLGWAGLAQIAFFIITLLVALIYLWRRGALDWGPQRR.

3 helical membrane-spanning segments follow: residues 24–44, 77–97, and 106–126; these read LLALALYVALACIIVVSLLLA, VPFYLTAIFFVVFDVEVAFIA, and LGWAGLAQIAFFIITLLVALI.

This sequence belongs to the complex I subunit 3 family. In terms of assembly, NDH-1 is composed of 14 different subunits. Subunits NuoA, H, J, K, L, M, N constitute the membrane sector of the complex.

The protein localises to the cell inner membrane. It carries out the reaction a quinone + NADH + 5 H(+)(in) = a quinol + NAD(+) + 4 H(+)(out). Its function is as follows. NDH-1 shuttles electrons from NADH, via FMN and iron-sulfur (Fe-S) centers, to quinones in the respiratory chain. The immediate electron acceptor for the enzyme in this species is believed to be ubiquinone. Couples the redox reaction to proton translocation (for every two electrons transferred, four hydrogen ions are translocated across the cytoplasmic membrane), and thus conserves the redox energy in a proton gradient. This chain is NADH-quinone oxidoreductase subunit A, found in Syntrophotalea carbinolica (strain DSM 2380 / NBRC 103641 / GraBd1) (Pelobacter carbinolicus).